The sequence spans 118 residues: Large ribosomal subunit protein bL19 (118 aa).

The protein belongs to the bacterial ribosomal protein bL19 family.

Functionally, this protein is located at the 30S-50S ribosomal subunit interface and may play a role in the structure and function of the aminoacyl-tRNA binding site. The chain is Large ribosomal subunit protein bL19 from Campylobacter lari (strain RM2100 / D67 / ATCC BAA-1060).